We begin with the raw amino-acid sequence, 290 residues long: Nucleotide-binding protein Sde_3181 (290 aa).

Residue 8–15 (GRSGSGKT) coordinates ATP. 60-63 (DARN) is a GTP binding site.

Belongs to the RapZ-like family.

Its function is as follows. Displays ATPase and GTPase activities. The sequence is that of Nucleotide-binding protein Sde_3181 from Saccharophagus degradans (strain 2-40 / ATCC 43961 / DSM 17024).